We begin with the raw amino-acid sequence, 88 residues long: FXYD domain-containing ion transport regulator 3 (88 aa).

Residues 1-20 form the signal peptide; sequence MQEFALSLLVLLAGLPTLDA. Residues 21–38 are Extracellular-facing; it reads NDPEDKDSPFYYDWHSLR. The chain crosses the membrane as a helical span at residues 39–59; that stretch reads VGGLICAGILCALGIIVLMSG. Residues 60–88 are Cytoplasmic-facing; it reads KCKCKFSQKPSHRPGDGPPLITPGSAHNC. The interval 66–88 is disordered; it reads SQKPSHRPGDGPPLITPGSAHNC.

It belongs to the FXYD family. Regulatory subunit of the sodium/potassium-transporting ATPase which is composed of a catalytic alpha subunit, a non-catalytic beta subunit and an additional regulatory subunit. Interacts with catalytic alpha subunit ATP1A1. Also interacts with non-catalytic beta subunit ATP1B1. Interacts with the alpha1-beta1, alpha2-beta1 and alpha3-beta1 NKA isozymes. In terms of processing, glutathionylated.

The protein resides in the cell membrane. Its function is as follows. Associates with and regulates the activity of the sodium/potassium-transporting ATPase (NKA) which transports Na(+) out of the cell and K(+) into the cell. Reduces glutathionylation of the NKA beta-1 subunit ATP1B1, thus reversing glutathionylation-mediated inhibition of ATP1B1. Induces a hyperpolarization-activated chloride current when expressed in Xenopus oocytes. This is FXYD domain-containing ion transport regulator 3 (Fxyd3) from Rattus norvegicus (Rat).